The primary structure comprises 138 residues: Large ribosomal subunit protein uL16 (138 aa).

A compositionally biased stretch (basic residues) spans Met1–Gln17. The interval Met1–Ser22 is disordered.

It belongs to the universal ribosomal protein uL16 family. As to quaternary structure, part of the 50S ribosomal subunit.

Binds 23S rRNA and is also seen to make contacts with the A and possibly P site tRNAs. The protein is Large ribosomal subunit protein uL16 of Mycobacterium tuberculosis (strain ATCC 25177 / H37Ra).